Reading from the N-terminus, the 384-residue chain is MGAGGRMQVSPSPKKSETDTLKRVPCETPPFTVGELKKAIPPHCFKRSIPRSFSYLIWDIIVASCFYYVATTYFPLLPHPLSYVAWPLYWACQGVVLTGVWVIAHECGHHAFSDYQWLDDTVGLIFHSFLLVPYFSWKYSHRRHHSNTGSLERDEVFVPKKKSDIKWYGKYLNNPLGRTVMLTVQFTLGWPLYWAFNVSGRPYPEGFACHFHPNAPIYNDRERLQIYVSDAGILAVCYGLYRYAAAQGVASMVCLYGVPLLIVNAFLVLITYLQHTHPSLPHYDSSEWDWLRGALATVDRDYGILNKVFHNITDTHVAHHLFSTMPHYHAMEVTKAIKPILGDYYQFDGTPWVKAMWREAKECIYVEPDRQGEKKGVFWYNNKL.

Residues 1 to 23 form a disordered region; that stretch reads MGAGGRMQVSPSPKKSETDTLKR. Basic and acidic residues predominate over residues 14–23; the sequence is KKSETDTLKR. The next 2 membrane-spanning stretches (helical) occupy residues 56 to 76 and 84 to 104; these read LIWDIIVASCFYYVATTYFPL and VAWPLYWACQGVVLTGVWVIA. Positions 105–109 match the Histidine box-1 motif; the sequence is HECGH. A helical membrane pass occupies residues 117–137; the sequence is WLDDTVGLIFHSFLLVPYFSW. Positions 141-145 match the Histidine box-2 motif; that stretch reads HRRHH. 3 helical membrane passes run 180–200, 226–246, and 253–273; these read VMLTVQFTLGWPLYWAFNVSG, IYVSDAGILAVCYGLYRYAAA, and VCLYGVPLLIVNAFLVLITYL. The short motif at 316 to 320 is the Histidine box-3 element; the sequence is HVAHH.

Belongs to the fatty acid desaturase type 1 family.

Its subcellular location is the endoplasmic reticulum membrane. It participates in lipid metabolism; polyunsaturated fatty acid biosynthesis. ER (microsomal) omega-6 fatty acid desaturase introduces the second double bond in the biosynthesis of 18:3 fatty acids, important constituents of plant membranes. It is thought to use cytochrome b5 as an electron donor and to act on fatty acids esterified to phosphatidylcholine and, possibly, other phospholipids. This chain is Omega-6 fatty acid desaturase, endoplasmic reticulum, found in Brassica juncea (Indian mustard).